The sequence spans 560 residues: 2-isopropylmalate synthase (560 aa).

The region spanning Pro30–Glu303 is the Pyruvate carboxyltransferase domain. 4 residues coordinate Mg(2+): Asp39, His242, His244, and Asn278. The segment at Gln437–Ala560 is regulatory domain.

It belongs to the alpha-IPM synthase/homocitrate synthase family. LeuA type 2 subfamily. As to quaternary structure, homodimer. Mg(2+) is required as a cofactor.

It localises to the cytoplasm. The enzyme catalyses 3-methyl-2-oxobutanoate + acetyl-CoA + H2O = (2S)-2-isopropylmalate + CoA + H(+). The protein operates within amino-acid biosynthesis; L-leucine biosynthesis; L-leucine from 3-methyl-2-oxobutanoate: step 1/4. Catalyzes the condensation of the acetyl group of acetyl-CoA with 3-methyl-2-oxobutanoate (2-ketoisovalerate) to form 3-carboxy-3-hydroxy-4-methylpentanoate (2-isopropylmalate). This is 2-isopropylmalate synthase from Rhizobium johnstonii (strain DSM 114642 / LMG 32736 / 3841) (Rhizobium leguminosarum bv. viciae).